The primary structure comprises 326 residues: L-carnitine dehydrogenase (326 aa).

Residue 19–24 (GTGVIG) participates in NAD(+) binding.

The protein belongs to the 3-hydroxyacyl-CoA dehydrogenase family. L-carnitine dehydrogenase subfamily. In terms of assembly, homodimer.

It localises to the cytoplasm. The catalysed reaction is carnitine + NAD(+) = 3-dehydrocarnitine + NADH + H(+). Its pathway is amine and polyamine metabolism; carnitine metabolism. Catalyzes the NAD(+)-dependent oxidation of L-carnitine to 3-dehydrocarnitine. This is L-carnitine dehydrogenase from Bacillus cereus (strain ZK / E33L).